A 266-amino-acid polypeptide reads, in one-letter code: Glucosamine-6-phosphate deaminase (266 aa).

Asp-72 serves as the catalytic Proton acceptor; for enolization step. The active-site For ring-opening step is the Asp-141. His-143 serves as the catalytic Proton acceptor; for ring-opening step. Glu-148 acts as the For ring-opening step in catalysis.

The protein belongs to the glucosamine/galactosamine-6-phosphate isomerase family. NagB subfamily. As to quaternary structure, homohexamer; trimer of disulfide-linked dimers.

It carries out the reaction alpha-D-glucosamine 6-phosphate + H2O = beta-D-fructose 6-phosphate + NH4(+). Its pathway is amino-sugar metabolism; N-acetylneuraminate degradation; D-fructose 6-phosphate from N-acetylneuraminate: step 5/5. Allosterically activated by N-acetylglucosamine 6-phosphate (GlcNAc6P). Catalyzes the reversible isomerization-deamination of glucosamine 6-phosphate (GlcN6P) to form fructose 6-phosphate (Fru6P) and ammonium ion. In Shigella flexneri serotype 5b (strain 8401), this protein is Glucosamine-6-phosphate deaminase.